The sequence spans 1407 residues: DNA-directed RNA polymerase subunit beta' (1407 aa).

Residues cysteine 70, cysteine 72, cysteine 85, and cysteine 88 each contribute to the Zn(2+) site. Aspartate 460, aspartate 462, and aspartate 464 together coordinate Mg(2+). Residues cysteine 814, cysteine 888, cysteine 895, and cysteine 898 each contribute to the Zn(2+) site.

Belongs to the RNA polymerase beta' chain family. The RNAP catalytic core consists of 2 alpha, 1 beta, 1 beta' and 1 omega subunit. When a sigma factor is associated with the core the holoenzyme is formed, which can initiate transcription. The cofactor is Mg(2+). It depends on Zn(2+) as a cofactor.

It catalyses the reaction RNA(n) + a ribonucleoside 5'-triphosphate = RNA(n+1) + diphosphate. In terms of biological role, DNA-dependent RNA polymerase catalyzes the transcription of DNA into RNA using the four ribonucleoside triphosphates as substrates. This chain is DNA-directed RNA polymerase subunit beta', found in Citrobacter koseri (strain ATCC BAA-895 / CDC 4225-83 / SGSC4696).